The primary structure comprises 260 residues: Ribonuclease HII (260 aa).

In terms of domain architecture, RNase H type-2 spans Gln70–Asn260. A divalent metal cation-binding residues include Asp76, Glu77, and Asp171.

The protein belongs to the RNase HII family. Mn(2+) serves as cofactor. The cofactor is Mg(2+).

The protein localises to the cytoplasm. The enzyme catalyses Endonucleolytic cleavage to 5'-phosphomonoester.. Its function is as follows. Endonuclease that specifically degrades the RNA of RNA-DNA hybrids. The sequence is that of Ribonuclease HII from Streptococcus mutans serotype c (strain ATCC 700610 / UA159).